The primary structure comprises 413 residues: Elongation factor 1-alpha (413 aa).

One can recognise a tr-type G domain in the interval 5–211 (KEHINLAFIG…DNLAAPEKPV (207 aa)). A G1 region spans residues 14 to 21 (GHVDHGKS). 14–21 (GHVDHGKS) provides a ligand contact to GTP. Serine 21 serves as a coordination point for Mg(2+). A G2 region spans residues 60–64 (GVTID). The tract at residues 81–84 (DCPG) is G3. Residues 81-85 (DCPGH) and 136-139 (NKID) each bind GTP. Residues 136–139 (NKID) form a G4 region. Positions 175 to 177 (SAF) are G5.

The protein belongs to the TRAFAC class translation factor GTPase superfamily. Classic translation factor GTPase family. EF-Tu/EF-1A subfamily.

The protein localises to the cytoplasm. The enzyme catalyses GTP + H2O = GDP + phosphate + H(+). Its function is as follows. GTP hydrolase that promotes the GTP-dependent binding of aminoacyl-tRNA to the A-site of ribosomes during protein biosynthesis. The protein is Elongation factor 1-alpha of Methanobrevibacter smithii (strain ATCC 35061 / DSM 861 / OCM 144 / PS).